The chain runs to 104 residues: Iron-sulfur cluster assembly protein CyaY (104 aa).

It belongs to the frataxin family.

Its function is as follows. Involved in iron-sulfur (Fe-S) cluster assembly. May act as a regulator of Fe-S biogenesis. The polypeptide is Iron-sulfur cluster assembly protein CyaY (Aliivibrio fischeri (strain MJ11) (Vibrio fischeri)).